The primary structure comprises 192 residues: Pyridoxal 5'-phosphate synthase subunit PdxT (192 aa).

Residue 47–49 (GES) coordinates L-glutamine. The active-site Nucleophile is Cys-79. Residues Arg-106 and 134–135 (IR) contribute to the L-glutamine site. Catalysis depends on charge relay system residues His-170 and Glu-172.

It belongs to the glutaminase PdxT/SNO family. In the presence of PdxS, forms a dodecamer of heterodimers. Only shows activity in the heterodimer.

The catalysed reaction is aldehydo-D-ribose 5-phosphate + D-glyceraldehyde 3-phosphate + L-glutamine = pyridoxal 5'-phosphate + L-glutamate + phosphate + 3 H2O + H(+). It carries out the reaction L-glutamine + H2O = L-glutamate + NH4(+). It functions in the pathway cofactor biosynthesis; pyridoxal 5'-phosphate biosynthesis. In terms of biological role, catalyzes the hydrolysis of glutamine to glutamate and ammonia as part of the biosynthesis of pyridoxal 5'-phosphate. The resulting ammonia molecule is channeled to the active site of PdxS. The polypeptide is Pyridoxal 5'-phosphate synthase subunit PdxT (Anoxybacillus flavithermus (strain DSM 21510 / WK1)).